Consider the following 284-residue polypeptide: 2-dehydro-3-deoxyphosphooctonate aldolase (284 aa).

The protein belongs to the KdsA family.

It is found in the cytoplasm. It carries out the reaction D-arabinose 5-phosphate + phosphoenolpyruvate + H2O = 3-deoxy-alpha-D-manno-2-octulosonate-8-phosphate + phosphate. It functions in the pathway carbohydrate biosynthesis; 3-deoxy-D-manno-octulosonate biosynthesis; 3-deoxy-D-manno-octulosonate from D-ribulose 5-phosphate: step 2/3. The protein operates within bacterial outer membrane biogenesis; lipopolysaccharide biosynthesis. In Salmonella paratyphi A (strain ATCC 9150 / SARB42), this protein is 2-dehydro-3-deoxyphosphooctonate aldolase.